Consider the following 500-residue polypeptide: Glutamate--tRNA ligase (500 aa).

A 'HIGH' region motif is present at residues 12–22 (PSPTGHLHIGN). A 'KMSKS' region motif is present at residues 259 to 263 (KLSKR). ATP is bound at residue K262.

It belongs to the class-I aminoacyl-tRNA synthetase family. Glutamate--tRNA ligase type 1 subfamily. Monomer.

It localises to the cytoplasm. It catalyses the reaction tRNA(Glu) + L-glutamate + ATP = L-glutamyl-tRNA(Glu) + AMP + diphosphate. Catalyzes the attachment of glutamate to tRNA(Glu) in a two-step reaction: glutamate is first activated by ATP to form Glu-AMP and then transferred to the acceptor end of tRNA(Glu). In Lactobacillus delbrueckii subsp. bulgaricus (strain ATCC BAA-365 / Lb-18), this protein is Glutamate--tRNA ligase.